A 690-amino-acid polypeptide reads, in one-letter code: Copper-exporting P-type ATPase B (690 aa).

Over 1–64 (MHEHDSHGEA…MEDFKKRFYV (64 aa)) the chain is Cytoplasmic. Positions 23 to 46 (QHHEHHGHEEEHSAHHEKMKHSAD) are disordered. The span at 28 to 46 (HGHEEEHSAHHEKMKHSAD) shows a compositional bias: basic and acidic residues. The helical transmembrane segment at 65-85 (STLLTIPILILSPAIQTFLGF) threads the bilayer. Residues 86–91 (RVEFAG) are Extracellular-facing. Residues 92-112 (SLYILFLLSSAVYFYGGYPFL) form a helical membrane-spanning segment. At 113 to 127 (KGIFDELRRRQPGMM) the chain is on the cytoplasmic side. The helical transmembrane segment at 128–148 (TLIAVAISVAYFYSSAVVFGL) threads the bilayer. Residues 149–151 (KGK) lie on the Extracellular side of the membrane. Residues 152-172 (FFFWELATLIDIMLLGHYIEM) traverse the membrane as a helical segment. At 173 to 303 (RSVLGASRAL…KSRTQDLANR (131 aa)) the chain is on the cytoplasmic side. Residues 304 to 324 (AALLLTVIALTVGSVTLAIWL) traverse the membrane as a helical segment. Over 325-336 (AYIADFAFAIER) the chain is Extracellular. The helical transmembrane segment at 337 to 357 (AVTVMVITCPHALGLAIPLVV) threads the bilayer. Residues 358–640 (AVSTSLAAKS…RKTYSKMKQN (283 aa)) are Cytoplasmic-facing. Asp389 (4-aspartylphosphate intermediate) is an active-site residue. Phosphate is bound by residues 390–391 (KT), 537–538 (TG), and Lys565. 2 residues coordinate Mg(2+): Asp583 and Asp587. A helical transmembrane segment spans residues 641-661 (LLWATGYNAFAIPLAAGVLYS). Residues 662–663 (AG) are Extracellular-facing. A helical membrane pass occupies residues 664-684 (ILLSPAVGAILMSLSTVIVAI). At 685 to 690 (NARLLR) the chain is on the cytoplasmic side.

It belongs to the cation transport ATPase (P-type) (TC 3.A.3) family. Type IB subfamily.

The protein localises to the cell membrane. It catalyses the reaction Cu(2+)(in) + ATP + H2O = Cu(2+)(out) + ADP + phosphate + H(+). With respect to regulation, activated by Cu(2+) and to a lesser extent by Ag(+) and Cu(+). In terms of biological role, involved in copper export. The protein is Copper-exporting P-type ATPase B (copB) of Archaeoglobus fulgidus (strain ATCC 49558 / DSM 4304 / JCM 9628 / NBRC 100126 / VC-16).